A 177-amino-acid polypeptide reads, in one-letter code: Protein GrpE (177 aa).

The tract at residues 1–26 (MSEEIKKDDLQEEVEATETEETVEEV) is disordered. Over residues 10 to 26 (LQEEVEATETEETVEEV) the composition is skewed to acidic residues.

This sequence belongs to the GrpE family. In terms of assembly, homodimer.

Its subcellular location is the cytoplasm. Functionally, participates actively in the response to hyperosmotic and heat shock by preventing the aggregation of stress-denatured proteins, in association with DnaK and GrpE. It is the nucleotide exchange factor for DnaK and may function as a thermosensor. Unfolded proteins bind initially to DnaJ; upon interaction with the DnaJ-bound protein, DnaK hydrolyzes its bound ATP, resulting in the formation of a stable complex. GrpE releases ADP from DnaK; ATP binding to DnaK triggers the release of the substrate protein, thus completing the reaction cycle. Several rounds of ATP-dependent interactions between DnaJ, DnaK and GrpE are required for fully efficient folding. The protein is Protein GrpE of Streptococcus agalactiae serotype Ia (strain ATCC 27591 / A909 / CDC SS700).